Here is a 419-residue protein sequence, read N- to C-terminus: L-rhamnose isomerase (419 aa).

The Mn(2+) site is built by H262, D294, and D296.

This sequence belongs to the rhamnose isomerase family. As to quaternary structure, homotetramer. It depends on Mn(2+) as a cofactor.

It is found in the cytoplasm. The enzyme catalyses L-rhamnopyranose = L-rhamnulose. The protein operates within carbohydrate degradation; L-rhamnose degradation; glycerone phosphate from L-rhamnose: step 1/3. Functionally, catalyzes the interconversion of L-rhamnose and L-rhamnulose. This is L-rhamnose isomerase from Escherichia coli O127:H6 (strain E2348/69 / EPEC).